The following is a 328-amino-acid chain: MSNDLTSESKTANRAAGEKFRDADKLAHIPIKVVSSTKATMLRKPSWLRIKLPKSSERIDNIKANLRKNDLHSVCEEASCPNLSECFNHGTATFMILGDICTRRCPFCDVGHGRPLAPKSDEPKKLANSLKDMGLKYVVITSVDRDDLRDGGAQQFADCVKEIGEQAPNTKVEILVPDFRGRMDRALEILNQNPPHVFNHNMETAPRLYTKVRPGANYQWSLDLLKRFGEANPDVTTKSGLMVGLGETNEEILEVMQDLRDHGVTMLTVGQYLQPSKDHLAVERYVHPDDFAMFEREAKKMGYEHAACGPLVRSSYHADKQAAGEEVK.

Positions 75, 80, 86, 101, 105, 108, and 315 each coordinate [4Fe-4S] cluster. Residues 87–304 enclose the Radical SAM core domain; it reads FNHGTATFMI…EREAKKMGYE (218 aa).

Belongs to the radical SAM superfamily. Lipoyl synthase family. It depends on [4Fe-4S] cluster as a cofactor.

The protein localises to the cytoplasm. It carries out the reaction [[Fe-S] cluster scaffold protein carrying a second [4Fe-4S](2+) cluster] + N(6)-octanoyl-L-lysyl-[protein] + 2 oxidized [2Fe-2S]-[ferredoxin] + 2 S-adenosyl-L-methionine + 4 H(+) = [[Fe-S] cluster scaffold protein] + N(6)-[(R)-dihydrolipoyl]-L-lysyl-[protein] + 4 Fe(3+) + 2 hydrogen sulfide + 2 5'-deoxyadenosine + 2 L-methionine + 2 reduced [2Fe-2S]-[ferredoxin]. It participates in protein modification; protein lipoylation via endogenous pathway; protein N(6)-(lipoyl)lysine from octanoyl-[acyl-carrier-protein]: step 2/2. Catalyzes the radical-mediated insertion of two sulfur atoms into the C-6 and C-8 positions of the octanoyl moiety bound to the lipoyl domains of lipoate-dependent enzymes, thereby converting the octanoylated domains into lipoylated derivatives. This is Lipoyl synthase from Colwellia psychrerythraea (strain 34H / ATCC BAA-681) (Vibrio psychroerythus).